A 406-amino-acid chain; its full sequence is Argininosuccinate synthase (406 aa).

Residues 14–22 and alanine 41 each bind ATP; that span reads AYSGGLDTS. Residues tyrosine 92 and serine 97 each coordinate L-citrulline. Glycine 122 contacts ATP. L-aspartate is bound by residues threonine 124, asparagine 128, and aspartate 129. L-citrulline is bound at residue asparagine 128. The L-citrulline site is built by arginine 132, serine 181, serine 190, glutamate 266, and tyrosine 278.

It belongs to the argininosuccinate synthase family. Type 1 subfamily. As to quaternary structure, homotetramer.

Its subcellular location is the cytoplasm. It carries out the reaction L-citrulline + L-aspartate + ATP = 2-(N(omega)-L-arginino)succinate + AMP + diphosphate + H(+). The protein operates within amino-acid biosynthesis; L-arginine biosynthesis; L-arginine from L-ornithine and carbamoyl phosphate: step 2/3. The polypeptide is Argininosuccinate synthase (Geobacter sulfurreducens (strain ATCC 51573 / DSM 12127 / PCA)).